A 139-amino-acid chain; its full sequence is Peptide methionine sulfoxide reductase MsrB (139 aa).

The MsrB domain maps to 8–130 (DREWQRELSP…NSASLQLKTQ (123 aa)). Zn(2+) contacts are provided by Cys-47, Cys-50, Cys-96, and Cys-99. Cys-119 serves as the catalytic Nucleophile.

It belongs to the MsrB Met sulfoxide reductase family. Zn(2+) is required as a cofactor.

The enzyme catalyses L-methionyl-[protein] + [thioredoxin]-disulfide + H2O = L-methionyl-(R)-S-oxide-[protein] + [thioredoxin]-dithiol. The protein is Peptide methionine sulfoxide reductase MsrB of Acinetobacter baumannii (strain SDF).